A 461-amino-acid polypeptide reads, in one-letter code: GTPase Der (461 aa).

EngA-type G domains lie at 2-164 and 197-368; these read QKII…EDDV and IRVG…KNFT. Residues 8–15, 55–59, 116–119, 203–210, 250–254, and 314–317 each bind GTP; these read GKPNVGKS, DSGGL, NKID, GRVNVGKS, DTAGI, and NKWD. Residues 369–453 enclose the KH-like domain; sequence QKIQTSKLNE…PIVLAPKKRG (85 aa).

It belongs to the TRAFAC class TrmE-Era-EngA-EngB-Septin-like GTPase superfamily. EngA (Der) GTPase family. In terms of assembly, associates with the 50S ribosomal subunit.

Functionally, GTPase that plays an essential role in the late steps of ribosome biogenesis. The polypeptide is GTPase Der (Campylobacter curvus (strain 525.92)).